The primary structure comprises 309 residues: Ribonuclease Z (309 aa).

Positions 63, 65, 67, 68, 141, 212, and 270 each coordinate Zn(2+). Catalysis depends on aspartate 67, which acts as the Proton acceptor.

It belongs to the RNase Z family. In terms of assembly, homodimer. It depends on Zn(2+) as a cofactor.

The enzyme catalyses Endonucleolytic cleavage of RNA, removing extra 3' nucleotides from tRNA precursor, generating 3' termini of tRNAs. A 3'-hydroxy group is left at the tRNA terminus and a 5'-phosphoryl group is left at the trailer molecule.. Zinc phosphodiesterase, which displays some tRNA 3'-processing endonuclease activity. Probably involved in tRNA maturation, by removing a 3'-trailer from precursor tRNA. The protein is Ribonuclease Z of Lactobacillus gasseri (strain ATCC 33323 / DSM 20243 / BCRC 14619 / CIP 102991 / JCM 1131 / KCTC 3163 / NCIMB 11718 / NCTC 13722 / AM63).